Here is a 425-residue protein sequence, read N- to C-terminus: Apolipoprotein N-acyltransferase (425 aa).

The next 6 helical transmembrane spans lie at 12-32 (LLAC…AYAI), 34-54 (NPYI…LAFL), 60-80 (SAFA…ALSF), 88-108 (LLPL…YLLL), 120-140 (FLGS…DSFF), and 142-162 (YSVF…CIFL). Residues 201–425 (VSTKTPQDLK…LGDILFRKRS (225 aa)) form the CN hydrolase domain. E242 acts as the Proton acceptor in catalysis. The active site involves K296. C349 acts as the Nucleophile in catalysis.

It belongs to the CN hydrolase family. Apolipoprotein N-acyltransferase subfamily.

Its subcellular location is the cell inner membrane. It carries out the reaction N-terminal S-1,2-diacyl-sn-glyceryl-L-cysteinyl-[lipoprotein] + a glycerophospholipid = N-acyl-S-1,2-diacyl-sn-glyceryl-L-cysteinyl-[lipoprotein] + a 2-acyl-sn-glycero-3-phospholipid + H(+). It participates in protein modification; lipoprotein biosynthesis (N-acyl transfer). Functionally, catalyzes the phospholipid dependent N-acylation of the N-terminal cysteine of apolipoprotein, the last step in lipoprotein maturation. This is Apolipoprotein N-acyltransferase from Helicobacter pylori (strain ATCC 700392 / 26695) (Campylobacter pylori).